The following is a 492-amino-acid chain: Beclin 1-associated autophagy-related key regulator (492 aa).

At serine 29 the chain carries Phosphoserine. Residues 43 to 58 (CPLCNTTRRRLTCAKC) form a cysteine repeats region. The stretch at 71–180 (DRERFIDKKE…KLGDLVEKKT (110 aa)) forms a coiled coil. Positions 410 to 473 (PGVAGESDES…PIASSSAGGM (64 aa)) are disordered. The segment at 413 to 492 (AGESDESGDE…SWFKAYTGHR (80 aa)) is BATS. A compositionally biased stretch (acidic residues) spans 415–433 (ESDESGDERVSDEETDLGT). Serine 416 is modified (phosphoserine). Position 429 is a phosphothreonine (threonine 429). Residues 448–473 (SQSVEVSQSQSTQASPPIASSSAGGM) are compositionally biased toward low complexity.

Belongs to the ATG14 family. As to quaternary structure, forms homooligomers; homo-oligomerization is essential for the roles in membrane tethering and enhancement of SNARE-mediated fusion. Component of the PI3K (PI3KC3/PI3K-III/class III phosphatidylinositol 3-kinase) complex I (PI3KC3-C1) in which the core composed of the catalytic subunit PIK3C3, the regulatory subunit PIK3R4 and BECN1 is associated with ATG14. PI3KC3-C1 displays a V-shaped architecture with PIK3R4 serving as a bridge between PIK3C3 and the ATG14:BECN1 subcomplex. PI3KC3-C1 can associate with further regulatory subunits. Interacts with PIK3CB. Interacts (via coiled-coil domain) with BECN2 (via coiled-coil domain); this interaction is tighter than BECN2 self-association. Interacts with the STX17-SNAP29 binary t-SNARE complex. Interacts with NRBF2. Interacts with PIK3C3 and BECN1; this interaction is increased in the absence of TMEM39A. Interacts with STEEP1; the interaction is required for trafficking of STING1 from the endoplasmic reticulum. Interacts with ARMC3 (via ARM domains). In terms of processing, ubiquitinated via 'Lys-6', 'Lys-11' and 'Lys-63'-linked polyubiquitin chains on multiple lysines by MARCHF7, leading to ATG14 aggregation and loss of interaction with STX17.

Its subcellular location is the cytoplasm. The protein localises to the endoplasmic reticulum membrane. It is found in the preautophagosomal structure membrane. The protein resides in the cytoplasmic vesicle. It localises to the autophagosome membrane. In terms of biological role, required for both basal and inducible autophagy. Determines the localization of the autophagy-specific PI3-kinase complex PI3KC3-C1. Plays a role in autophagosome formation and MAP1LC3/LC3 conjugation to phosphatidylethanolamine. Promotes BECN1 translocation from the trans-Golgi network to autophagosomes. Enhances PIK3C3 activity in a BECN1-dependent manner. Essential for the autophagy-dependent phosphorylation of BECN1. Stimulates the phosphorylation of BECN1, but suppresses the phosphorylation PIK3C3 by AMPK. Binds to STX17-SNAP29 binary t-SNARE complex on autophagosomes and primes it for VAMP8 interaction to promote autophagosome-endolysosome fusion. Modulates the hepatic lipid metabolism. The chain is Beclin 1-associated autophagy-related key regulator from Homo sapiens (Human).